Here is a 315-residue protein sequence, read N- to C-terminus: HTH-type transcriptional regulator TreR (315 aa).

Positions 5–59 constitute an HTH lacI-type domain; the sequence is LTIKDIARLSGVGKSTVSRVLNNESGVSERTRERVEAVMNQHGFSPSRSARAMRG. Positions 7–26 form a DNA-binding region, H-T-H motif; sequence IKDIARLSGVGKSTVSRVLN. Alpha,alpha-trehalose 6-phosphate-binding positions include 71-77, glycine 126, arginine 147, 187-190, arginine 194, threonine 242, and tyrosine 284; these read RLDSLSE and DITT.

In terms of assembly, homodimer.

Its function is as follows. Repressor of the treBC operon. It is able to bind trehalose-6-phosphate. The sequence is that of HTH-type transcriptional regulator TreR (treR) from Salmonella typhimurium (strain LT2 / SGSC1412 / ATCC 700720).